Consider the following 401-residue polypeptide: Phosphoglycerate kinase (401 aa).

Residues Asp-20–Asn-22, Arg-35, His-58–Arg-61, Arg-117, and Arg-154 each bind substrate. ATP contacts are provided by residues Lys-204, Gly-298, Glu-329, and Gly-358–Ser-361.

The protein belongs to the phosphoglycerate kinase family. In terms of assembly, monomer.

The protein localises to the cytoplasm. The catalysed reaction is (2R)-3-phosphoglycerate + ATP = (2R)-3-phospho-glyceroyl phosphate + ADP. It participates in carbohydrate degradation; glycolysis; pyruvate from D-glyceraldehyde 3-phosphate: step 2/5. The polypeptide is Phosphoglycerate kinase (Bifidobacterium longum (strain DJO10A)).